Reading from the N-terminus, the 683-residue chain is Methionine--tRNA ligase (683 aa).

The 'HIGH' region motif lies at 23-33; that stretch reads PYANGSAHIGH. Positions 154, 157, 166, and 170 each coordinate Zn(2+). Residues 335 to 339 carry the 'KMSKS' region motif; it reads KFSKS. Lysine 338 contacts ATP. A tRNA-binding domain is found at 583 to 683; it reads DFAKMELRVG…KPSEPGTKVR (101 aa).

It belongs to the class-I aminoacyl-tRNA synthetase family. MetG type 1 subfamily. As to quaternary structure, homodimer. The cofactor is Zn(2+).

It localises to the cytoplasm. It catalyses the reaction tRNA(Met) + L-methionine + ATP = L-methionyl-tRNA(Met) + AMP + diphosphate. Is required not only for elongation of protein synthesis but also for the initiation of all mRNA translation through initiator tRNA(fMet) aminoacylation. This is Methionine--tRNA ligase from Methanocella arvoryzae (strain DSM 22066 / NBRC 105507 / MRE50).